A 595-amino-acid polypeptide reads, in one-letter code: Metacaspase-1 (595 aa).

Active-site residues include H411 and C466.

Belongs to the peptidase C14B family. In terms of assembly, monomer.

With respect to regulation, activated by Ca(2+). In terms of biological role, cysteine protease that cleaves specifically after arginine or lysine residues. In Plasmodium berghei (strain Anka), this protein is Metacaspase-1.